The primary structure comprises 317 residues: Ferrochelatase (317 aa).

Fe cation contacts are provided by H191 and E271.

This sequence belongs to the ferrochelatase family.

It is found in the cytoplasm. It catalyses the reaction heme b + 2 H(+) = protoporphyrin IX + Fe(2+). Its pathway is porphyrin-containing compound metabolism; protoheme biosynthesis; protoheme from protoporphyrin-IX: step 1/1. Catalyzes the ferrous insertion into protoporphyrin IX. This Thermus thermophilus (strain ATCC BAA-163 / DSM 7039 / HB27) protein is Ferrochelatase.